We begin with the raw amino-acid sequence, 223 residues long: V-type ATP synthase subunit D (223 aa).

The segment at 203–223 is disordered; sequence AREAEEEGGRPNPQVEIGAGL.

This sequence belongs to the V-ATPase D subunit family.

In terms of biological role, produces ATP from ADP in the presence of a proton gradient across the membrane. This chain is V-type ATP synthase subunit D, found in Thermus thermophilus (strain ATCC BAA-163 / DSM 7039 / HB27).